Here is a 753-residue protein sequence, read N- to C-terminus: 5-methyltetrahydropteroyltriglutamate--homocysteine methyltransferase (753 aa).

5-methyltetrahydropteroyltri-L-glutamate is bound by residues 17–20 (RELK) and Lys-117. L-homocysteine-binding positions include 431–433 (IGS) and Glu-484. Residues 431 to 433 (IGS) and Glu-484 each bind L-methionine. 5-methyltetrahydropteroyltri-L-glutamate-binding positions include 515 to 516 (RC) and Trp-561. Asp-599 lines the L-homocysteine pocket. Asp-599 serves as a coordination point for L-methionine. 5-methyltetrahydropteroyltri-L-glutamate is bound at residue Glu-605. Positions 641, 643, and 665 each coordinate Zn(2+). His-694 acts as the Proton donor in catalysis. Cys-726 is a Zn(2+) binding site.

The protein belongs to the vitamin-B12 independent methionine synthase family. The cofactor is Zn(2+).

It catalyses the reaction 5-methyltetrahydropteroyltri-L-glutamate + L-homocysteine = tetrahydropteroyltri-L-glutamate + L-methionine. Its pathway is amino-acid biosynthesis; L-methionine biosynthesis via de novo pathway; L-methionine from L-homocysteine (MetE route): step 1/1. In terms of biological role, catalyzes the transfer of a methyl group from 5-methyltetrahydrofolate to homocysteine resulting in methionine formation. This is 5-methyltetrahydropteroyltriglutamate--homocysteine methyltransferase from Shigella sonnei (strain Ss046).